The chain runs to 124 residues: U12-barytoxin-Tl1a (124 aa).

Positions 1–20 (MKTMIAWLVLLTFAAALCFA) are cleaved as a signal peptide. The propeptide occupies 21–78 (DEGLKQEHMNERKKSRFREDIPDEISEDLLLQEMEAMEAELLEKEMRMEENRNSREKR). 3 disulfides stabilise this stretch: Cys-79–Cys-99, Cys-86–Cys-104, and Cys-98–Cys-118.

Belongs to the neurotoxin 14 (magi-1) family. 04 (ICK-6) subfamily. Expressed by the venom gland.

It localises to the secreted. In terms of biological role, ion channel inhibitor. The sequence is that of U12-barytoxin-Tl1a from Trittame loki (Brush-footed trapdoor spider).